The chain runs to 86 residues: Small ribosomal subunit protein uS15 (86 aa).

The disordered stretch occupies residues 1 to 22; sequence MSIDTQKVIEDNKRSSADTGSP. Positions 7 to 16 are enriched in basic and acidic residues; it reads KVIEDNKRSS.

The protein belongs to the universal ribosomal protein uS15 family. Part of the 30S ribosomal subunit. Forms a bridge to the 50S subunit in the 70S ribosome, contacting the 23S rRNA.

Its function is as follows. One of the primary rRNA binding proteins, it binds directly to 16S rRNA where it helps nucleate assembly of the platform of the 30S subunit by binding and bridging several RNA helices of the 16S rRNA. In terms of biological role, forms an intersubunit bridge (bridge B4) with the 23S rRNA of the 50S subunit in the ribosome. This chain is Small ribosomal subunit protein uS15, found in Stenotrophomonas maltophilia (strain R551-3).